The chain runs to 282 residues: DegV domain-containing protein SPy_0865/M5005_Spy0672 (282 aa).

Residues 3–280 form the DegV domain; it reads LAVITDSTAT…EGAIAFGVTP (278 aa). Thr61 and Ser94 together coordinate hexadecanoate.

Its function is as follows. May bind long-chain fatty acids, such as palmitate, and may play a role in lipid transport or fatty acid metabolism. This chain is DegV domain-containing protein SPy_0865/M5005_Spy0672, found in Streptococcus pyogenes serotype M1.